Here is a 505-residue protein sequence, read N- to C-terminus: MSEQNAQGADEVVDLNNEMKARREKLAALREQGIPFPNDFRRDRTSDQLHAEFDAKEAEELEALNIEVSVAGRMMTRRIMGKASFVTLQDVGGRIQLYVARDDLPEGVYNEQFKKWDLGDILGAKGKLFKTKTGELSIHCSELRLLTKALRPLPDKFHGLQDQEARYRQRYLDLISNDESRNTFKTRSKILAGIRQFMVARGFMEVETPMMQVIPGGASARPFITHHNALDLDMYLRIAPELYLKRLVVGGFERVFEINRNFRNEGISVRHNPEFTMMELYMAYADYKDLIELTESLFRTLAQDVLGNTQVPYGDEVFDFGKPFEKLTMREAIKKYRPETDMADLDNFDSAKAIAESIGIHVEKSWGLGRIVTEIFDEVAEAHLIQPTFITEYPAEVSPLARRNDVNPEITDRFEFFIGGREIGNGFSELNDAEDQAQRFQDQVNAKAAGDDEAMFYDEDYVTALEHGLPPTAGLGIGIDRMVMLFTNSHTIRDVILFPAMRPVK.

The Mg(2+) site is built by glutamate 415 and glutamate 422.

It belongs to the class-II aminoacyl-tRNA synthetase family. Homodimer. The cofactor is Mg(2+).

The protein resides in the cytoplasm. The enzyme catalyses tRNA(Lys) + L-lysine + ATP = L-lysyl-tRNA(Lys) + AMP + diphosphate. The sequence is that of Lysine--tRNA ligase from Salmonella arizonae (strain ATCC BAA-731 / CDC346-86 / RSK2980).